A 196-amino-acid chain; its full sequence is Imidazole glycerol phosphate synthase subunit HisH (196 aa).

The Glutamine amidotransferase type-1 domain occupies 2-196 (KIIIINTNCS…EQLIKNFLEI (195 aa)). The active-site Nucleophile is the Cys77. Catalysis depends on residues His178 and Glu180.

In terms of assembly, heterodimer of HisH and HisF.

The protein localises to the cytoplasm. It carries out the reaction 5-[(5-phospho-1-deoxy-D-ribulos-1-ylimino)methylamino]-1-(5-phospho-beta-D-ribosyl)imidazole-4-carboxamide + L-glutamine = D-erythro-1-(imidazol-4-yl)glycerol 3-phosphate + 5-amino-1-(5-phospho-beta-D-ribosyl)imidazole-4-carboxamide + L-glutamate + H(+). It catalyses the reaction L-glutamine + H2O = L-glutamate + NH4(+). The protein operates within amino-acid biosynthesis; L-histidine biosynthesis; L-histidine from 5-phospho-alpha-D-ribose 1-diphosphate: step 5/9. Its function is as follows. IGPS catalyzes the conversion of PRFAR and glutamine to IGP, AICAR and glutamate. The HisH subunit catalyzes the hydrolysis of glutamine to glutamate and ammonia as part of the synthesis of IGP and AICAR. The resulting ammonia molecule is channeled to the active site of HisF. This chain is Imidazole glycerol phosphate synthase subunit HisH, found in Blochmanniella floridana.